Consider the following 656-residue polypeptide: Heparan-alpha-glucosaminide N-acetyltransferase (656 aa).

Positions 1–31 (MTGGSSSRRRRAEERSSAAGTERNSRREAVG) are disordered. The Lumenal, vesicle segment spans residues 1-185 (MTGGSSSRRR…IIVNENPVDS (185 aa)). Residues asparagine 137 and asparagine 157 are each glycosylated (N-linked (GlcNAc...) asparagine). A disulfide bridge links cysteine 146 with cysteine 455. The helical transmembrane segment at 186–206 (NLPVSIAFLVGLALIVAVSLL) threads the bilayer. Residues 207–268 (RLLLSLDDVN…NRLRCVDTFR (62 aa)) lie on the Cytoplasmic side of the membrane. The disordered stretch occupies residues 234–253 (SELGSPSRADPLSADYQPET). Phosphoserine is present on residues serine 238 and serine 240. Residue tyrosine 249 is modified to Phosphotyrosine. Residues 269 to 289 (GLALVLMVFVNYGGGKYWYFK) form a helical membrane-spanning segment. Residue histidine 290 is part of the active site. Topologically, residues 290-295 (HSSWNG) are lumenal, vesicle. A helical transmembrane segment spans residues 296–316 (LTVADLVFPWFVFIMGTSIFL). Over 317 to 338 (SMTSILQRGCSKLKLLGKIVWR) the chain is Cytoplasmic. The helical transmembrane segment at 339-359 (SFLLICIGVIIVNPNYCLGPL) threads the bilayer. Residues 360-367 (SWDKVRIP) are Lumenal, vesicle-facing. A helical transmembrane segment spans residues 368 to 388 (GVLQRLGVTYFVVAVLEFFFW). Over 389 to 413 (KPVPDSCTLESSCFSLRDITSSWPQ) the chain is Cytoplasmic. Residues 414–434 (WLTILTLESIWLALTFFLPVP) traverse the membrane as a helical segment. Topologically, residues 435–493 (GCPTGYLGPGGIGDLGKYPHCTGGAAGYIDRLLLGDNHLYQHPSSTVLYHTEVAYDPEG) are lumenal, vesicle. Residues 494-514 (VLGTINSIVMAFLGVQAGKIL) traverse the membrane as a helical segment. The Cytoplasmic segment spans residues 515 to 522 (VYYKDQTK). The helical transmembrane segment at 523-543 (AILTRFAAWCCILGLISIVLT) threads the bilayer. Over 544-557 (KVSANEGFIPINKN) the chain is Lumenal, vesicle. A helical membrane pass occupies residues 558-578 (LWSISYVTTLSCFAFFILLIL). At 579 to 585 (YPVVDVK) the chain is on the cytoplasmic side. A helical membrane pass occupies residues 586-606 (GLWTGTPFFYPGMNSILVYVG). Residues 607 to 627 (HEVLENYFPFQWKLADEQSHK) are Lumenal, vesicle-facing. The helical transmembrane segment at 628–648 (EHLIQNIVATALWVLIAYVLY) threads the bilayer. Residues 641–656 (VLIAYVLYKKKLFWKI) form a lysosomal targeting region region. The Cytoplasmic segment spans residues 649–656 (KKKLFWKI).

In terms of assembly, homooligomer. Homooligomerization is necessary for enzyme activity. Post-translationally, undergoes intralysosomal proteolytic cleavage; occurs within the end of the first and/or the beginning of the second luminal domain and is essential for the activation of the enzyme. Glycosylated. Expressed in the retina.

It is found in the lysosome membrane. It carries out the reaction alpha-D-glucosaminyl-[heparan sulfate](n) + acetyl-CoA = N-acetyl-alpha-D-glucosaminyl-[heparan sulfate](n) + CoA + H(+). Lysosomal acetyltransferase that acetylates the non-reducing terminal alpha-glucosamine residue of intralysosomal heparin or heparan sulfate, converting it into a substrate for luminal alpha-N-acetyl glucosaminidase. The sequence is that of Heparan-alpha-glucosaminide N-acetyltransferase (Hgsnat) from Mus musculus (Mouse).